The primary structure comprises 782 residues: HHIP-like protein 1 (782 aa).

The first 19 residues, 1–19 (MARARAGALLALWVLGAAA), serve as a signal peptide directing secretion. Intrachain disulfides connect Cys181–Cys521, Cys185–Cys528, Cys399–Cys417, and Cys484–Cys584. An N-linked (GlcNAc...) asparagine glycan is attached at Asn234. The interval 604–666 (EKFIPKTRST…RRGRLNSASR (63 aa)) is disordered. Positions 610 to 623 (TRSTPRPTARAPTR) are enriched in low complexity. Residues 632–642 (AAPPAPTPRPA) show a composition bias toward pro residues. The 104-residue stretch at 673–776 (VRLVRPAGLS…HDEDAGVVCS (104 aa)) folds into the SRCR domain. Intrachain disulfides connect Cys700-Cys765, Cys713-Cys775, and Cys745-Cys755.

It belongs to the HHIP family.

The protein resides in the secreted. The chain is HHIP-like protein 1 (HHIPL1) from Homo sapiens (Human).